The following is a 163-amino-acid chain: MASVHGITVKNAQGEDTPLSNYQGKVLIIVNVASQCGLTNSNYNQFKELLDVYKKDGLEVLAFPCNQFGGQEPSCEIDIAAFVADKFKFEPTLFQKIDVNGDNTAPLYKFLKQEKGGFLVDAIKWNFTKFLVGRDGHVIKRFSPTTEPKDMKKDIEAALQAKL.

The active site involves Cys-36.

Belongs to the glutathione peroxidase family.

The protein localises to the cytoplasm. The enzyme catalyses 2 glutathione + H2O2 = glutathione disulfide + 2 H2O. Functionally, may constitute a glutathione peroxidase-like protective system against oxidative stresses. In Caenorhabditis elegans, this protein is Glutathione peroxidase 2 (gpx-2).